Consider the following 216-residue polypeptide: Uracil phosphoribosyltransferase (216 aa).

Residues Arg-85, Arg-110, and 135–143 contribute to the 5-phospho-alpha-D-ribose 1-diphosphate site; that span reads DPMVATGYS. Residues Ile-200 and 205–207 each bind uracil; that span reads GDA. Asp-206 is a binding site for 5-phospho-alpha-D-ribose 1-diphosphate.

It belongs to the UPRTase family. Mg(2+) serves as cofactor.

It carries out the reaction UMP + diphosphate = 5-phospho-alpha-D-ribose 1-diphosphate + uracil. The protein operates within pyrimidine metabolism; UMP biosynthesis via salvage pathway; UMP from uracil: step 1/1. Its activity is regulated as follows. Allosterically activated by GTP. Its function is as follows. Catalyzes the conversion of uracil and 5-phospho-alpha-D-ribose 1-diphosphate (PRPP) to UMP and diphosphate. In Paraburkholderia xenovorans (strain LB400), this protein is Uracil phosphoribosyltransferase.